The sequence spans 584 residues: Arginine--tRNA ligase (584 aa).

The 'HIGH' region motif lies at 126–136; it reads PNIAKEMHVGH.

This sequence belongs to the class-I aminoacyl-tRNA synthetase family. As to quaternary structure, monomer.

Its subcellular location is the cytoplasm. It catalyses the reaction tRNA(Arg) + L-arginine + ATP = L-arginyl-tRNA(Arg) + AMP + diphosphate. The polypeptide is Arginine--tRNA ligase (Synechococcus sp. (strain ATCC 27144 / PCC 6301 / SAUG 1402/1) (Anacystis nidulans)).